A 273-amino-acid chain; its full sequence is Putative phosphoenolpyruvate synthase regulatory protein (273 aa).

154–161 (GVSRSGKT) contributes to the ADP binding site.

This sequence belongs to the pyruvate, phosphate/water dikinase regulatory protein family. PSRP subfamily.

It catalyses the reaction [pyruvate, water dikinase] + ADP = [pyruvate, water dikinase]-phosphate + AMP + H(+). The catalysed reaction is [pyruvate, water dikinase]-phosphate + phosphate + H(+) = [pyruvate, water dikinase] + diphosphate. Its function is as follows. Bifunctional serine/threonine kinase and phosphorylase involved in the regulation of the phosphoenolpyruvate synthase (PEPS) by catalyzing its phosphorylation/dephosphorylation. The polypeptide is Putative phosphoenolpyruvate synthase regulatory protein (Neisseria meningitidis serogroup C (strain 053442)).